The chain runs to 672 residues: Transcription factor tau 91 kDa subunit (672 aa).

Residues 1 to 158 are required for DNA-binding; the sequence is MAVIPAKKRG…SLGQKGRPIR (158 aa). The a.T hook DNA-binding region spans 6–18; that stretch reads AKKRGRPRKSVVA. 2 disordered regions span residues 24–45 and 67–156; these read SLAS…ASKK and VNNV…KGRP. The span at 71–100 shows a compositional bias: acidic residues; that stretch reads DDTDDDDFVLNDEGDGEESDNVEIEFENEL. The tract at residues 159 to 672 is sufficient for interaction with TFC8; that stretch reads LLKDLSSARD…AGLLTLEYLS (514 aa). An intrachain disulfide couples Cys-375 to Cys-383.

In terms of assembly, heterodimer with TFC8. Component of the TFIIIC complex composed of TFC1, TFC3, TFC4, TFC6, TFC7 and TFC8. The subunits are organized in two globular domains, tauA and tauB, connected by a proteolysis-sensitive and flexible linker. Interacts with TFC1, TFC3, TFC4 and directly with TFC8.

It is found in the nucleus. TFIIIC mediates tRNA and 5S RNA gene activation by binding to intragenic promoter elements. Upstream of the transcription start site, TFIIIC assembles the initiation complex TFIIIB-TFIIIC-tDNA, which is sufficient for RNA polymerase III recruitment and function. Part of the tauB domain of TFIIIC that binds boxB DNA promoter sites of tRNA and similar genes. Cooperates with TFC3 in DNA binding. The polypeptide is Transcription factor tau 91 kDa subunit (TFC6) (Saccharomyces cerevisiae (strain ATCC 204508 / S288c) (Baker's yeast)).